The chain runs to 609 residues: Glutamine--fructose-6-phosphate aminotransferase [isomerizing] (609 aa).

The active-site Nucleophile; for GATase activity is the Cys-2. The Glutamine amidotransferase type-2 domain maps to 2–217; the sequence is CGIVGYIGRR…EGWLAELTPE (216 aa). 2 consecutive SIS domains span residues 286–425 and 458–599; these read SAAE…QNGR and AAEA…VDKP. Lys-604 acts as the For Fru-6P isomerization activity in catalysis.

Homodimer.

The protein localises to the cytoplasm. It carries out the reaction D-fructose 6-phosphate + L-glutamine = D-glucosamine 6-phosphate + L-glutamate. Catalyzes the first step in hexosamine metabolism, converting fructose-6P into glucosamine-6P using glutamine as a nitrogen source. This chain is Glutamine--fructose-6-phosphate aminotransferase [isomerizing], found in Symbiobacterium thermophilum (strain DSM 24528 / JCM 14929 / IAM 14863 / T).